Consider the following 448-residue polypeptide: Tubulin beta chain (448 aa).

GTP contacts are provided by Gln11, Glu69, Ser138, Gly142, Thr143, Gly144, Asn204, and Asn226. Glu69 lines the Mg(2+) pocket.

This sequence belongs to the tubulin family. In terms of assembly, dimer of alpha and beta chains. A typical microtubule is a hollow water-filled tube with an outer diameter of 25 nm and an inner diameter of 15 nM. Alpha-beta heterodimers associate head-to-tail to form protofilaments running lengthwise along the microtubule wall with the beta-tubulin subunit facing the microtubule plus end conferring a structural polarity. Microtubules usually have 13 protofilaments but different protofilament numbers can be found in some organisms and specialized cells. Requires Mg(2+) as cofactor.

Its subcellular location is the cytoplasm. The protein localises to the cytoskeleton. Its function is as follows. Tubulin is the major constituent of microtubules, a cylinder consisting of laterally associated linear protofilaments composed of alpha- and beta-tubulin heterodimers. Microtubules grow by the addition of GTP-tubulin dimers to the microtubule end, where a stabilizing cap forms. Below the cap, tubulin dimers are in GDP-bound state, owing to GTPase activity of alpha-tubulin. The polypeptide is Tubulin beta chain (TUB1) (Melampsora lini (Rust fungus)).